The chain runs to 419 residues: Serine hydroxymethyltransferase 1 (419 aa).

(6S)-5,6,7,8-tetrahydrofolate contacts are provided by residues Leu121 and 125–127; that span reads GHL. Position 230 is an N6-(pyridoxal phosphate)lysine (Lys230). 356 to 358 contacts (6S)-5,6,7,8-tetrahydrofolate; sequence SPF.

This sequence belongs to the SHMT family. Homodimer. It depends on pyridoxal 5'-phosphate as a cofactor.

The protein resides in the cytoplasm. It carries out the reaction (6R)-5,10-methylene-5,6,7,8-tetrahydrofolate + glycine + H2O = (6S)-5,6,7,8-tetrahydrofolate + L-serine. It functions in the pathway one-carbon metabolism; tetrahydrofolate interconversion. The protein operates within amino-acid biosynthesis; glycine biosynthesis; glycine from L-serine: step 1/1. Catalyzes the reversible interconversion of serine and glycine with tetrahydrofolate (THF) serving as the one-carbon carrier. This reaction serves as the major source of one-carbon groups required for the biosynthesis of purines, thymidylate, methionine, and other important biomolecules. Also exhibits THF-independent aldolase activity toward beta-hydroxyamino acids, producing glycine and aldehydes, via a retro-aldol mechanism. This chain is Serine hydroxymethyltransferase 1, found in Colwellia psychrerythraea (strain 34H / ATCC BAA-681) (Vibrio psychroerythus).